The following is a 131-amino-acid chain: Profilin-4 (131 aa).

Cys-13 and Cys-115 are disulfide-bonded. The short motif at 81 to 97 is the Involved in PIP2 interaction element; it reads AVIRGKKGAGGITIKKT. Phosphothreonine is present on Thr-111.

The protein belongs to the profilin family. Occurs in many kinds of cells as a complex with monomeric actin in a 1:1 ratio. Phosphorylated by MAP kinases.

It localises to the cytoplasm. The protein resides in the cytoskeleton. Functionally, binds to actin and affects the structure of the cytoskeleton. At high concentrations, profilin prevents the polymerization of actin, whereas it enhances it at low concentrations. In Phleum pratense (Common timothy), this protein is Profilin-4.